A 411-amino-acid polypeptide reads, in one-letter code: Tetra-peptide repeat homeobox protein 1 (411 aa).

The homeobox DNA-binding region spans serine 3 to arginine 24. 4 disordered regions span residues leucine 20–leucine 63, isoleucine 88–proline 246, proline 286–alanine 340, and leucine 363–leucine 411. Low complexity predominate over residues glutamine 27 to proline 55. Composition is skewed to pro residues over residues glycine 95 to isoleucine 139 and phenylalanine 149 to proline 246. A compositionally biased stretch (low complexity) spans serine 295–glycine 307. Over residues alanine 319 to proline 335 the composition is skewed to pro residues. Composition is skewed to polar residues over residues serine 366–glutamine 376 and glycine 388–histidine 402.

Belongs to the paired homeobox family.

It localises to the nucleus. In terms of biological role, transcription factor expressed after fertilization required for zygotic genome activation (ZGA), a critical event in early embryonic development during which the developmental control passes from maternally provided mRNAs to the expression of the zygotic genome after fertilization. Binds and activates expression of key ZGA marker genes, such as NANOGNB, ZSCAN4, DUXB, KLF5 and DPPA3. Binds to regulatory DNA sequences containing a 5'-TAATCC-3' sequence motif. This chain is Tetra-peptide repeat homeobox protein 1, found in Homo sapiens (Human).